Reading from the N-terminus, the 603-residue chain is Penicillin-binding protein activator LpoA (603 aa).

The first 26 residues, 1–26, serve as a signal peptide directing secretion; the sequence is MAMNHHQRRSVPRLLTPIALSIVLSA. Cys-27 is lipidated: N-palmitoyl cysteine. Cys-27 carries the S-diacylglycerol cysteine lipid modification.

It belongs to the LpoA family. In terms of assembly, interacts with PBP1a.

The protein localises to the cell outer membrane. In terms of biological role, regulator of peptidoglycan synthesis that is essential for the function of penicillin-binding protein 1A (PBP1a). The polypeptide is Penicillin-binding protein activator LpoA (Vibrio cholerae serotype O1 (strain ATCC 39541 / Classical Ogawa 395 / O395)).